Consider the following 1365-residue polypeptide: Serine/threonine-protein kinase LMTK1 (1365 aa).

The helical transmembrane segment at 32–52 (LAVVAVSFSGIFTVVILMLAC) threads the bilayer. Positions 126 to 396 (LLYLKEIGHG…PTAEEVHLLL (271 aa)) constitute a Protein kinase domain. ATP-binding positions include 132–140 (IGHGWFGKV) and Lys157. Asp254 functions as the Proton acceptor in the catalytic mechanism. Ser500 is modified (phosphoserine). 5 disordered regions span residues 550 to 623 (PDCA…LPAE), 638 to 698 (DDPL…GYVS), 791 to 1186 (QEAE…PAVP), 1237 to 1293 (ESPT…EWDG), and 1343 to 1365 (ISDS…YTEA). A compositionally biased stretch (polar residues) spans 560 to 575 (QAVTDQDNNSEESTVA). Composition is skewed to low complexity over residues 638–655 (DDPL…QPSP) and 675–686 (SSNMSANNNSAS). 2 stretches are compositionally biased toward polar residues: residues 848-860 (LESS…QEAP) and 869-879 (EATSGVFTDLS). Composition is skewed to low complexity over residues 904-918 (PDSL…SASD) and 981-993 (PLLS…LSKK). The segment covering 1015 to 1030 (PEKHSGIQDSQKEQDL) has biased composition (basic and acidic residues). Ser1035 is modified (phosphoserine). Over residues 1037–1053 (GHQSVQAFPRSAVSSEV) the composition is skewed to polar residues. Positions 1072–1083 (PLGAQGPVGVQP) are enriched in low complexity. Residues 1104 to 1132 (GSGTEPQGPSGQLSGRAQQGQMGNPSTPR) show a composition bias toward polar residues. Residues 1150–1164 (PEEDEDTEDSEESDE) are compositionally biased toward acidic residues. Phosphothreonine is present on Thr1156. Phosphoserine is present on residues Ser1159, Ser1162, Ser1175, Ser1178, and Ser1253. Residues 1354-1365 (PAAGAGGRYTEA) are compositionally biased toward gly residues.

It belongs to the protein kinase superfamily. Tyr protein kinase family. Interacts with CDK5. In terms of processing, autophosphorylated. Phosphorylated by CDK5. In terms of tissue distribution, expressed in brain, and, to a lower extent, in kidney, heart, lung and skeletal muscle. In the brain, expressed in the olfactory bulb, cerebellum, striatum, hippocampal formation, thalamus, hypothalamus, and pontine nuclei (at protein level).

It is found in the membrane. The protein localises to the cytoplasm. The protein resides in the perinuclear region. Its subcellular location is the cell projection. It localises to the dendrite. It is found in the axon. The protein localises to the growth cone. It carries out the reaction L-seryl-[protein] + ATP = O-phospho-L-seryl-[protein] + ADP + H(+). The enzyme catalyses L-threonyl-[protein] + ATP = O-phospho-L-threonyl-[protein] + ADP + H(+). May be involved in neuronal differentiation. In Mus musculus (Mouse), this protein is Serine/threonine-protein kinase LMTK1 (Aatk).